We begin with the raw amino-acid sequence, 431 residues long: Ubiquitin-like modifier-activating enzyme 5 (431 aa).

ATP is bound by residues G92, D113, K136, N159, and N197. Residues C239 and C242 each coordinate Zn(2+). The active-site Glycyl thioester intermediate is the C263. Zn(2+) is bound by residues C316 and C321. The segment at 339-396 is disordered; sequence AKAKMEADASTTIDEGPLHDDNEWNISVVDDENEKDTTKAASSSDTLPEGLTRELPVA.

This sequence belongs to the ubiquitin-activating E1 family. UBA5 subfamily.

In terms of biological role, E1-like enzyme which activates UFM1. The chain is Ubiquitin-like modifier-activating enzyme 5 from Arabidopsis thaliana (Mouse-ear cress).